A 444-amino-acid polypeptide reads, in one-letter code: ATP-dependent protease ATPase subunit HslU (444 aa).

Residues Ile-18, 60-65, Asp-256, Glu-321, and Arg-393 each bind ATP; that span reads GVGKTE.

It belongs to the ClpX chaperone family. HslU subfamily. In terms of assembly, a double ring-shaped homohexamer of HslV is capped on each side by a ring-shaped HslU homohexamer. The assembly of the HslU/HslV complex is dependent on binding of ATP.

It is found in the cytoplasm. Functionally, ATPase subunit of a proteasome-like degradation complex; this subunit has chaperone activity. The binding of ATP and its subsequent hydrolysis by HslU are essential for unfolding of protein substrates subsequently hydrolyzed by HslV. HslU recognizes the N-terminal part of its protein substrates and unfolds these before they are guided to HslV for hydrolysis. The protein is ATP-dependent protease ATPase subunit HslU of Buchnera aphidicola subsp. Baizongia pistaciae (strain Bp).